The primary structure comprises 296 residues: GTPase Era (296 aa).

Residues 2-171 form the Era-type G domain; the sequence is KAGFIAVVGR…LEALDPYLED (170 aa). Residues 10–17 form a G1 region; the sequence is GRPNVGKS. 10-17 contacts GTP; that stretch reads GRPNVGKS. The segment at 36 to 40 is G2; that stretch reads GTTRD. The tract at residues 57-60 is G3; it reads DTPG. GTP is bound by residues 57-61 and 120-123; these read DTPGI and NKVD. Positions 120-123 are G4; the sequence is NKVD. The G5 stretch occupies residues 150-152; sequence ASG. The KH type-2 domain maps to 202–279; it reads TRDEIPHSVA…YLGLWVKVKD (78 aa).

It belongs to the TRAFAC class TrmE-Era-EngA-EngB-Septin-like GTPase superfamily. Era GTPase family. In terms of assembly, monomer.

Its subcellular location is the cytoplasm. It is found in the cell inner membrane. Functionally, an essential GTPase that binds both GDP and GTP, with rapid nucleotide exchange. Plays a role in 16S rRNA processing and 30S ribosomal subunit biogenesis and possibly also in cell cycle regulation and energy metabolism. In Fusobacterium nucleatum subsp. nucleatum (strain ATCC 25586 / DSM 15643 / BCRC 10681 / CIP 101130 / JCM 8532 / KCTC 2640 / LMG 13131 / VPI 4355), this protein is GTPase Era.